We begin with the raw amino-acid sequence, 145 residues long: D-aminoacyl-tRNA deacylase (145 aa).

Positions Gly137–Pro138 match the Gly-cisPro motif, important for rejection of L-amino acids motif.

The protein belongs to the DTD family. In terms of assembly, homodimer.

It localises to the cytoplasm. The catalysed reaction is glycyl-tRNA(Ala) + H2O = tRNA(Ala) + glycine + H(+). It catalyses the reaction a D-aminoacyl-tRNA + H2O = a tRNA + a D-alpha-amino acid + H(+). In terms of biological role, an aminoacyl-tRNA editing enzyme that deacylates mischarged D-aminoacyl-tRNAs. Also deacylates mischarged glycyl-tRNA(Ala), protecting cells against glycine mischarging by AlaRS. Acts via tRNA-based rather than protein-based catalysis; rejects L-amino acids rather than detecting D-amino acids in the active site. By recycling D-aminoacyl-tRNA to D-amino acids and free tRNA molecules, this enzyme counteracts the toxicity associated with the formation of D-aminoacyl-tRNA entities in vivo and helps enforce protein L-homochirality. The chain is D-aminoacyl-tRNA deacylase from Teredinibacter turnerae (strain ATCC 39867 / T7901).